The following is a 138-amino-acid chain: Putative pre-16S rRNA nuclease (138 aa).

It belongs to the YqgF nuclease family.

It is found in the cytoplasm. In terms of biological role, could be a nuclease involved in processing of the 5'-end of pre-16S rRNA. This chain is Putative pre-16S rRNA nuclease, found in Flavobacterium johnsoniae (strain ATCC 17061 / DSM 2064 / JCM 8514 / BCRC 14874 / CCUG 350202 / NBRC 14942 / NCIMB 11054 / UW101) (Cytophaga johnsonae).